Consider the following 313-residue polypeptide: MPRVFTGLPANYAAPTLALSLLLPLLLVVWTQLPVSARPSTGPDYLRRGWLRLLAEGEGCAPCRPEECAAPRGCLAGRVRDACGCCWECANLEGQLCDLDPSANFYGRCGEQLECRLDAGGDLSRGEVPEPLCVCRSQRPLCGSDGRTYAQICRLQEAARARLDANLTVVHPGPCESEPQILSQPHNIWNVTGQDVIFGCEVFAYPMASIEWRKDGLDIQLPGDDPHISVQFRGGPQKFEVTGWLQIQALRPSDEGTYRCLARNALGQAEASATLTVLTPEQLNATGFSQLQSRSLFPEEEEEAESEELGDYY.

The first 37 residues, 1-37 (MPRVFTGLPANYAAPTLALSLLLPLLLVVWTQLPVSA), serve as a signal peptide directing secretion. The region spanning 56–136 (EGEGCAPCRP…EVPEPLCVCR (81 aa)) is the IGFBP N-terminal domain. Disulfide bonds link C60–C83, C63–C85, C68–C86, C74–C89, C97–C115, C109–C133, and C142–C175. Positions 127–177 (EVPEPLCVCRSQRPLCGSDGRTYAQICRLQEAARARLDANLTVVHPGPCES) constitute a Kazal-like domain. 2 N-linked (GlcNAc...) asparagine glycosylation sites follow: N166 and N190. An Ig-like C2-type domain is found at 179-276 (PQILSQPHNI…GQAEASATLT (98 aa)). C200 and C260 are disulfide-bonded. N284 carries an N-linked (GlcNAc...) asparagine glycan. A disordered region spans residues 290–313 (QLQSRSLFPEEEEEAESEELGDYY). The span at 298–313 (PEEEEEAESEELGDYY) shows a compositional bias: acidic residues.

In terms of tissue distribution, highly expressed in the spleen. Moderately expressed in the skin, lung and urinary bladder. Weakly expressed in the brain, tongue, esophagus, stomach, large intestine, liver and bone. Expressed in osteoblastic cells during bone regeneration. Expressed in secretory osteoblasts in the tooth.

Its subcellular location is the secreted. It localises to the extracellular space. The protein localises to the extracellular matrix. Functionally, involved in the proliferation of osteoblasts during bone formation and bone regeneration. Promotes matrix assembly. The polypeptide is Kazal-type serine protease inhibitor domain-containing protein 1 (Kazald1) (Mus musculus (Mouse)).